Consider the following 348-residue polypeptide: NADH-quinone oxidoreductase subunit H (348 aa).

8 helical membrane-spanning segments follow: residues 10-30 (LPFL…LVLV), 82-102 (GVFL…WAVI), 115-135 (VGLL…IMGG), 161-181 (IGFV…TTIV), 199-219 (FLDW…ISAL), 251-271 (LFFL…TILF), 287-307 (IPGV…FAIV), and 322-342 (LGWK…AAFL).

The protein belongs to the complex I subunit 1 family. NDH-1 is composed of 14 different subunits. Subunits NuoA, H, J, K, L, M, N constitute the membrane sector of the complex.

It is found in the cell inner membrane. The enzyme catalyses a quinone + NADH + 5 H(+)(in) = a quinol + NAD(+) + 4 H(+)(out). Functionally, NDH-1 shuttles electrons from NADH, via FMN and iron-sulfur (Fe-S) centers, to quinones in the respiratory chain. The immediate electron acceptor for the enzyme in this species is believed to be ubiquinone. Couples the redox reaction to proton translocation (for every two electrons transferred, four hydrogen ions are translocated across the cytoplasmic membrane), and thus conserves the redox energy in a proton gradient. This subunit may bind ubiquinone. This is NADH-quinone oxidoreductase subunit H from Bartonella tribocorum (strain CIP 105476 / IBS 506).